Consider the following 310-residue polypeptide: Syntaxin-related protein KNOLLE (310 aa).

The residue at position 1 (Met1) is an N-acetylmethionine. Topologically, residues 1-283 are cytoplasmic; sequence MNDLMTKSFM…AKSHQRNSRK (283 aa). Residues 94 to 159 are a coiled coil; sequence NEIVSGLRKA…FQGLRQKMMS (66 aa). Residues 212 to 274 form the t-SNARE coiled-coil homology domain; the sequence is VVEIQDRYDA…ADGANELKTA (63 aa). The helical; Anchor for type IV membrane protein transmembrane segment at 284 to 304 threads the bilayer; that stretch reads WMCIGIIVLLLIILIVVIPII. Over 305 to 310 the chain is Vesicular; it reads TSFSSS.

This sequence belongs to the syntaxin family. In terms of assembly, interacts with SNAP33 and/or NPSN11 to form a t-SNARE complex and with KEULE. As to expression, abundant in flowers and developing siliques. A low level expression is seen in the seedlings, roots, and leaves.

It is found in the membrane. Involved in cytokinesis. Acts as a cell plate-specific syntaxin, required for the fusion of vesicles at the plane of cell division. The polypeptide is Syntaxin-related protein KNOLLE (KN) (Arabidopsis thaliana (Mouse-ear cress)).